The primary structure comprises 59 residues: Large ribosomal subunit protein uL30 (59 aa).

This sequence belongs to the universal ribosomal protein uL30 family. Part of the 50S ribosomal subunit.

This Staphylococcus haemolyticus (strain JCSC1435) protein is Large ribosomal subunit protein uL30.